The following is a 532-amino-acid chain: Cytochrome P450 monooxygenase pgmC (532 aa).

The chain crosses the membrane as a helical span at residues 15-32 (ISTLAVLIGFIALLTAWL). C438 is a binding site for heme.

Belongs to the cytochrome P450 family. It depends on heme as a cofactor.

The protein localises to the membrane. It participates in pigment biosynthesis. It functions in the pathway secondary metabolite biosynthesis. In terms of biological role, cytochrome P450 monooxygenase; part of the gene cluster that mediates the biosynthesis of pleosporalin A, ascomycone A, as well as a third cryptic naphthoquinone derived pigment, all responsible for the coloration of conidia. Involved in the oxidation of fusarubinaldehyde at C-9. PgmC has low substrate-specificity and is also able to use the pgmA product 3-acetonyl-1,6,8-trihydroxy-2-naphthaldehyde as a substrate. The pathway begins with the biosynthesis of the cyclized heptaketide 3-acetonyl-1,6,8-trihydroxy-2-naphthaldehyde by the NR-PKS pgmA. The C-6 hydroxyl group is further methylated by the O-methyltransferase pgmB to yield fusarubinaldehyde which is in turn oxidized by the cytochrome P450 monooxygenase pgmC at C-9. The C-1 hydroxyl group is then methylated spontaneously. Although pgmE, pgmD and pgmH are essential for the production of pleosporalin A, it is not the case for the 2 other final products and it remains difficult to assign a specific function to each enzyme. PgmF and pgmG seem not to be involved in pigment biosynthesis although they were regulated by the cluster-specific transcription factor pgmR. The polypeptide is Cytochrome P450 monooxygenase pgmC (Aspergillus terreus (strain NIH 2624 / FGSC A1156)).